The primary structure comprises 412 residues: MAASIFAAVPRAPPVAVFKLTADFREDGDSRKVNLGVGAYRTDEGQPWVLPVVRKVEQLIAGDGSLNHEYLPILGLPEFRANASRIALGDDSPAIAQKRVGSVQGLGGTGALRIGAEFLRRWYNGNNNTATPVYVSSPTWENHNSVFMDAGFKDIRTYRYWDAAKRGLDLQGLLDDMEKAPEFSIFILHACAHNPTGTDPTPDEWKQIAAVMKRRCLFPFFDSAYQGFASGSLDKDAWAVRYFVSEGFELFCAQSFSKNFGLYNERVGNLSVVGKDEDNVQRVLSQMEKIVRTTWSNPPSQGARIVATTLTSPQLFAEWKDNVKTMADRVLLMRSELRSRLESLGTPGTWNHITDQIGMFSFTGLNPKQVEYMIKEKHIYLMASGRINMCGLTTKNLDYVAKSIHEAVTKIQ.

Ala2 bears the N-acetylalanine mark. L-aspartate is bound by residues Gly38, Trp140, and Asn194. An N6-(pyridoxal phosphate)lysine modification is found at Lys258. Residue Arg386 participates in L-aspartate binding.

Belongs to the class-I pyridoxal-phosphate-dependent aminotransferase family. Homodimer. Pyridoxal 5'-phosphate serves as cofactor.

It is found in the cytoplasm. The enzyme catalyses L-aspartate + 2-oxoglutarate = oxaloacetate + L-glutamate. The catalysed reaction is L-cysteine + 2-oxoglutarate = 2-oxo-3-sulfanylpropanoate + L-glutamate. It carries out the reaction (2S)-2-aminobutanoate + 2-oxoglutarate = 2-oxobutanoate + L-glutamate. It catalyses the reaction 3-sulfino-L-alanine + 2-oxoglutarate = 3-sulfinopyruvate + L-glutamate. In terms of biological role, biosynthesis of L-glutamate from L-aspartate or L-cysteine. Important regulator of levels of glutamate, the major excitatory neurotransmitter of the vertebrate central nervous system. Acts as a scavenger of glutamate in brain neuroprotection. The aspartate aminotransferase activity is involved in hepatic glucose synthesis during development and in adipocyte glyceroneogenesis. Using L-cysteine as substrate, regulates levels of mercaptopyruvate, an important source of hydrogen sulfide. Mercaptopyruvate is converted into H(2)S via the action of 3-mercaptopyruvate sulfurtransferase (3MST). Hydrogen sulfide is an important synaptic modulator and neuroprotectant in the brain. The sequence is that of Aspartate aminotransferase, cytoplasmic from Gallus gallus (Chicken).